A 508-amino-acid chain; its full sequence is POTE ankyrin domain family member G (508 aa).

ANK repeat units follow at residues 172–201 (QKRTALHLASANGNSEVVKLLLDRRCQLNI), 205–234 (KKRTALTKAVQCREDECALMLLEHGTDPNI), 238–267 (YGNTALHYAIYNEDKLMAKALLLYGADIES), 271–300 (HGLTPLLLGVHEQKQQVVKFLIKKKANLNA), and 304–333 (YGRTALILAVCCGSASIVSLLLEQNIDVSS). Positions 367 to 376 (KVSSENSNPE) are enriched in polar residues. The interval 367–488 (KVSSENSNPE…QLSEEQNTGI (122 aa)) is disordered. Basic and acidic residues-rich tracts occupy residues 377–392 (QDLKLTSEEESQRLKG) and 406–421 (EINKGGDRKVEEEMKK). The segment covering 476-488 (TQKQLSEEQNTGI) has biased composition (polar residues).

The protein belongs to the POTE family.

This is POTE ankyrin domain family member G (POTEG) from Homo sapiens (Human).